Reading from the N-terminus, the 446-residue chain is 5-methylthioadenosine/S-adenosylhomocysteine deaminase (446 aa).

H72 and H74 together coordinate Zn(2+). Residues E101 and H194 each contribute to the substrate site. H221 contacts Zn(2+). Substrate is bound by residues E224 and D309. D309 contacts Zn(2+).

Belongs to the metallo-dependent hydrolases superfamily. MTA/SAH deaminase family. Requires Zn(2+) as cofactor.

The enzyme catalyses S-adenosyl-L-homocysteine + H2O + H(+) = S-inosyl-L-homocysteine + NH4(+). It carries out the reaction S-methyl-5'-thioadenosine + H2O + H(+) = S-methyl-5'-thioinosine + NH4(+). Functionally, catalyzes the deamination of 5-methylthioadenosine and S-adenosyl-L-homocysteine into 5-methylthioinosine and S-inosyl-L-homocysteine, respectively. Is also able to deaminate adenosine. The chain is 5-methylthioadenosine/S-adenosylhomocysteine deaminase from Saccharophagus degradans (strain 2-40 / ATCC 43961 / DSM 17024).